The sequence spans 334 residues: UDP-N-acetylglucosamine 4,6-dehydratase (inverting) (334 aa).

NADP(+) contacts are provided by residues 13 to 16, 37 to 42, 61 to 62, Ala81, Lys85, and 123 to 124; these read TGSF, SRDELK, DV, and LS. Residue Lys85 participates in substrate binding. Lys127 is an active-site residue. NADP(+) is bound by residues Tyr135 and Lys139. Asn167 is a substrate binding site. 168–172 contributes to the NADP(+) binding site; that stretch reads VVGSR. 4 residues coordinate substrate: Val175, Thr193, Arg252, and Glu255.

Belongs to the polysaccharide synthase family. In terms of assembly, homohexamer. The cofactor is NADP(+).

It carries out the reaction UDP-N-acetyl-alpha-D-glucosamine = UDP-2-acetamido-2,6-dideoxy-beta-L-arabino-hex-4-ulose + H2O. Functionally, catalyzes the first step in the biosynthesis of pseudaminic acid, a sialic-acid-like sugar that is used to modify flagellin. Has both C6 dehydratase and C5 epimerase activities that result in the production of both UDP-2-acetamido-2,6-dideoxy-beta-L-arabino-4-hexulose and UDP-2-acetamido-2,6-dideoxy-alpha-D-xylo-4-hexulose. The chain is UDP-N-acetylglucosamine 4,6-dehydratase (inverting) (pseB) from Campylobacter jejuni subsp. jejuni serotype O:2 (strain ATCC 700819 / NCTC 11168).